The sequence spans 490 residues: Betaine aldehyde dehydrogenase (490 aa).

Aspartate 93 serves as a coordination point for K(+). Glycine 150–tryptophan 152 is an NAD(+) binding site. Lysine 162 functions as the Charge relay system in the catalytic mechanism. An NAD(+)-binding site is contributed by lysine 176–glutamate 179. K(+) is bound at residue valine 180. Glycine 230 to serine 233 serves as a coordination point for NAD(+). A K(+)-binding site is contributed by leucine 246. Glutamate 252 functions as the Proton acceptor in the catalytic mechanism. Residues glycine 254, cysteine 286, and glutamate 387 each contribute to the NAD(+) site. Catalysis depends on cysteine 286, which acts as the Nucleophile. Cysteine sulfenic acid (-SOH) is present on cysteine 286. K(+)-binding residues include lysine 457 and glycine 460. Glutamate 464 (charge relay system) is an active-site residue.

Belongs to the aldehyde dehydrogenase family. As to quaternary structure, dimer of dimers. The cofactor is K(+).

It catalyses the reaction betaine aldehyde + NAD(+) + H2O = glycine betaine + NADH + 2 H(+). Its pathway is amine and polyamine biosynthesis; betaine biosynthesis via choline pathway; betaine from betaine aldehyde: step 1/1. In terms of biological role, involved in the biosynthesis of the osmoprotectant glycine betaine. Catalyzes the irreversible oxidation of betaine aldehyde to the corresponding acid. The chain is Betaine aldehyde dehydrogenase from Pectobacterium carotovorum subsp. carotovorum (strain PC1).